The sequence spans 298 residues: MKDLFRRAPKRFTAARIENQAIPDNMWVKCPSCGDLIYTRQFSDNLKVCKCGYHMRLAAREWLGLLDDGSFVEFDAALAPVDALEFISPRHVYAHKLSESQEQTGLNDALITGSGAIEGMPLCVAVTEFEFIGGSMGGAFGERLARIIEQAADARVPLLTINASGGARQEEGTLALLQMAKVNMALTRLAAVGQPHIAVLVDPCYGGVLASYTSVADIIIAEPGARIGFAGRRVIEQTIRQKLPAHFQTAEFLLSHGMIDMVTPRGELRSVLATLLRLFHNAPERAADVQNAPALARA.

One can recognise a CoA carboxyltransferase N-terminal domain in the interval 26–294; the sequence is MWVKCPSCGD…RAADVQNAPA (269 aa). Zn(2+) is bound by residues Cys-30, Cys-33, Cys-49, and Cys-51. The segment at 30–51 adopts a C4-type zinc-finger fold; sequence CPSCGDLIYTRQFSDNLKVCKC.

Belongs to the AccD/PCCB family. In terms of assembly, acetyl-CoA carboxylase is a heterohexamer composed of biotin carboxyl carrier protein (AccB), biotin carboxylase (AccC) and two subunits each of ACCase subunit alpha (AccA) and ACCase subunit beta (AccD). The cofactor is Zn(2+).

The protein localises to the cytoplasm. It catalyses the reaction N(6)-carboxybiotinyl-L-lysyl-[protein] + acetyl-CoA = N(6)-biotinyl-L-lysyl-[protein] + malonyl-CoA. It participates in lipid metabolism; malonyl-CoA biosynthesis; malonyl-CoA from acetyl-CoA: step 1/1. Functionally, component of the acetyl coenzyme A carboxylase (ACC) complex. Biotin carboxylase (BC) catalyzes the carboxylation of biotin on its carrier protein (BCCP) and then the CO(2) group is transferred by the transcarboxylase to acetyl-CoA to form malonyl-CoA. In Roseiflexus castenholzii (strain DSM 13941 / HLO8), this protein is Acetyl-coenzyme A carboxylase carboxyl transferase subunit beta 1.